We begin with the raw amino-acid sequence, 868 residues long: MFRVLNKVFDNNKRDVERIIQTVVKPVNALEEETMRVENLAEAFMDLRRRVQDGGESLDSLIVPAFALIREAGRRSIGKRHYDTQLIGGAALHQGRIAEMRTGEGKTLVATLALAFNALEGKGCHLVTVNDYLARVGMEEMGLLYRTLGLTVGLANRELSPAEKQAAYACDITYVTNSELGFDYLRDNMAQSKEALVLRADTPLHYAIVDEVDSILIDEARTPLIISGAAEKATDLYYVFAKLIRRLQKGEPAEPGVRTEPTGDYTIEEKSKAVHLTEQGITKIERLLSLKDLYSPENMDKAHMITQAIRARELYHREKDYIVNAEGEVVIVDEFTGRSMPGRRYGEGLHQAIEAKEGVKIENENQTLATITYQNFFRLYDKFAGMTGTAKTEEKEFLDIYGSDVLVIPTNKPVIRVDSDDLIYRTRMGKYAAVVGEVQEMHATGRPILIGTASIETSEQLSSLLQQAGVQHAVLNAKFEAQEASIIAQAGRSGTVTIATNMAGRGTDIMLGGNDEYIIGESIEQQLGVSRYAPEVEAFIKAISREDPAAEQLGMQIPGITLDFIRQAQELHRATVEDRQRVRDLGGLHIVGTERHESRRIDNQLRGRAGRQGDPGSSRFYVSFEDDLMRLFANDRVVGMMDRLGMDDSQPIEAKMVTGAIEKAQARVEDRNFGIRKQLLEFDNVMSKQRDEIYAQRREVLLGPDEDIEETTEGMIGDFVDSQLAAYAPIEVSHEQWDIEQLRSAMVEAVPALETFDFESLRVNSPAEAQDRLLSAVADAFDARKEELSPTMMNSLARYVLLQVVDQHWKEHLHGMDVLRQGIGLRGYGQRDPFTEYKFEATNMFNEMIDALKADVTKFIFRMQFGGA.

Residues Gln-85, 103–107 (GEGKT), and Asp-508 contribute to the ATP site.

Belongs to the SecA family. Monomer and homodimer. Part of the essential Sec protein translocation apparatus which comprises SecA, SecYEG and auxiliary proteins SecDF. Other proteins may also be involved.

It is found in the cell membrane. Its subcellular location is the cytoplasm. The enzyme catalyses ATP + H2O + cellular proteinSide 1 = ADP + phosphate + cellular proteinSide 2.. Functionally, part of the Sec protein translocase complex. Interacts with the SecYEG preprotein conducting channel. Has a central role in coupling the hydrolysis of ATP to the transfer of proteins into and across the cell membrane, serving as an ATP-driven molecular motor driving the stepwise translocation of polypeptide chains across the membrane. The polypeptide is Protein translocase subunit SecA (Deinococcus radiodurans (strain ATCC 13939 / DSM 20539 / JCM 16871 / CCUG 27074 / LMG 4051 / NBRC 15346 / NCIMB 9279 / VKM B-1422 / R1)).